A 132-amino-acid chain; its full sequence is MQRITITIDDDLMAALDRMIEIKGYQNRSEALRDLARTGLQQASLEEGQMEACVGVLSYTYDHSARDLSKKLTNTHHDHHNISVASMHVHLDHDRCLEVSILKGKTDDVRHFADHVKAERHVTHGTLAVLPL.

Ni(2+) contacts are provided by His77, His88, His90, and Cys96.

Belongs to the transcriptional regulatory CopG/NikR family. The cofactor is Ni(2+).

Functionally, transcriptional regulator. This is Putative nickel-responsive regulator from Brucella abortus (strain S19).